The primary structure comprises 1346 residues: G-protein coupled receptor-associated sorting protein 1 (1346 aa).

Disordered regions lie at residues Met1 to Glu101, Thr144 to Pro177, and Ala192 to Thr258. The segment covering Glu21–Val36 has biased composition (low complexity). The segment covering Phe211 to Met226 has biased composition (basic residues). Ser295 is subject to Phosphoserine. Disordered regions lie at residues Glu311–Glu399 and Val461–Met485. The segment covering Arg316–Ala333 has biased composition (basic residues). 2 stretches are compositionally biased toward basic and acidic residues: residues Asp347–Ala361 and Lys370–Glu399. Residues Val461–Ser484 show a composition bias toward polar residues. Phosphoserine occurs at positions 619 and 626. Thr860 is modified (phosphothreonine). At Ser862 the chain carries Phosphoserine. A disordered region spans residues Ala984–Trp1004. The span at Ser990–Ser1003 shows a compositional bias: basic and acidic residues.

This sequence belongs to the GPRASP family. In terms of assembly, interacts with cytoplasmic tails of a variety of G-protein coupled receptors such as delta opioid receptor/OPRD1, beta-2 adrenergic receptor/ADRB2 and D4 dopamine receptor/DRD4. Interacts with BECN2; the interaction is direct and with D2 dopamine receptor/DRD2. Interacts with PER1. As to expression, expressed in the brain.

It is found in the cytoplasm. Its function is as follows. Modulates lysosomal sorting and functional down-regulation of a variety of G-protein coupled receptors. Targets receptors for degradation in lysosomes via its interaction with BECN2. In Rattus norvegicus (Rat), this protein is G-protein coupled receptor-associated sorting protein 1 (Gprasp1).